We begin with the raw amino-acid sequence, 1010 residues long: MPIGVPRIIYCWGEELPAQWTDIYNFIFRRRMVFLMQYLDDELCNQICGLLINIHMEDRSKELEKKEIERSGLFKGGPKTQKGGTGAGETGASSIQNKKSNSSSFEDLLAADEDLGIDENNTLEQYTLQKITMEWLNWNAQFFDYSDEPYLFYLAEMLSKDFNKGDARMLFSNNNKFSMPFSQMLNTGSMSDPRRPQSTNGANWNSSEQNNSLDIYSPFRMLANFEAQDYDFKQINPSLASKEEVFKLFNNTILKNGGQRNNNMSKLLTELAQRNWENKTNSQENLYKSTEKALSQRNLRKEYIKDRTLNNYSSDPFNTKGYVNAQGASTGPSPRTRGMHADGSLNYLDFYSYNDSYNDFKTAPRGKQAERAFQEEESKKVFVIINSFGGSVGNGITVHDALQFIKAGSLTLALGVAASAASLALAGGTIGERYVTEGCHVMIHQPECLTSDHTVLTTRGWIPIADVTLDDKVAVLDNNTGEMSYQNPQKVHKYDYEGPMYEVKTAGVDLFVTPNHRMYVNTTNNTTNQNYNLVEASSIFGKKVRYKNDAIWNKTDYQFILPETATLTGHTNKISSTPAIQPEMNAWLTFFGLWIANGHTTKIAEKTAENNQQKQRYKVILTQVKEDVCDIIEQTLNKLGFNFIRSGKDYTIENKQLWSYLNPFDNGALNKYLPDWVWELSSQQCKILLNSLCLGNCLFTKNDDTLHYFSTSERFANDVSRLALHAGTTSTIQLEAAPSNLYDTIIGLPVEVNTTLWRVIINQSSFYSYSTDKSSALNLSNNVACYVNAQSALTLEQNSQKINKNTLVLTKNNVKSQTMHSQRAERVDTALLTQKELDNSLNHEILINKNPGTSQLECVVNPEVNNTSTNDRFVYYKGPVYCLTGPNNVFYVQRNGKAVWTGNSSIQGQASDIWIDSQEIMKIRLDVAEIYSLATYRPRHKILRDLDRDFYLTATETIHYGLADEIASNEVMQEIIEMTSKVWDYHDTKQQRLLESRDSTTSGADTQSQN.

The tract at residues 60–377 (SKELEKKEIE…QAERAFQEEE (318 aa)) is insertion IS1. Disordered stretches follow at residues 73 to 100 (LFKGGPKTQKGGTGAGETGASSIQNKKS) and 182 to 209 (SQMLNTGSMSDPRRPQSTNGANWNSSEQ). Residues 90–100 (TGASSIQNKKS) are compositionally biased toward low complexity. Serine 419 serves as the catalytic Nucleophile. Histidine 444 is an active-site residue. The region spanning 590 to 728 (FFGLWIANGH…VSRLALHAGT (139 aa)) is the DOD-type homing endonuclease domain.

Belongs to the peptidase S14 family. Component of the chloroplastic Clp protease core complex. Post-translationally, this protein undergoes a protein self splicing that involves a post-translational excision of the intervening region (intein) followed by peptide ligation.

Its subcellular location is the plastid. It localises to the chloroplast stroma. The enzyme catalyses Hydrolysis of proteins to small peptides in the presence of ATP and magnesium. alpha-casein is the usual test substrate. In the absence of ATP, only oligopeptides shorter than five residues are hydrolyzed (such as succinyl-Leu-Tyr-|-NHMec, and Leu-Tyr-Leu-|-Tyr-Trp, in which cleavage of the -Tyr-|-Leu- and -Tyr-|-Trp bonds also occurs).. In terms of biological role, cleaves peptides in various proteins in a process that requires ATP hydrolysis. Has a chymotrypsin-like activity. Plays a major role in the degradation of misfolded proteins. The chain is ATP-dependent Clp protease proteolytic subunit (clpP) from Chlamydomonas moewusii (Chlamydomonas eugametos).